The chain runs to 181 residues: Protein GrpE (181 aa).

Belongs to the GrpE family. In terms of assembly, homodimer.

It localises to the cytoplasm. In terms of biological role, participates actively in the response to hyperosmotic and heat shock by preventing the aggregation of stress-denatured proteins, in association with DnaK and GrpE. It is the nucleotide exchange factor for DnaK and may function as a thermosensor. Unfolded proteins bind initially to DnaJ; upon interaction with the DnaJ-bound protein, DnaK hydrolyzes its bound ATP, resulting in the formation of a stable complex. GrpE releases ADP from DnaK; ATP binding to DnaK triggers the release of the substrate protein, thus completing the reaction cycle. Several rounds of ATP-dependent interactions between DnaJ, DnaK and GrpE are required for fully efficient folding. This Leptothrix cholodnii (strain ATCC 51168 / LMG 8142 / SP-6) (Leptothrix discophora (strain SP-6)) protein is Protein GrpE.